The chain runs to 339 residues: tRNA pseudouridine synthase B (339 aa).

Asp-40 functions as the Nucleophile in the catalytic mechanism. The region spanning 262–307 (FRRLSKFAYREEFEENTERSTAAYTLVREDANTGLTYKLPLEVELS) is the RPE1 insert domain.

Belongs to the pseudouridine synthase TruB family. Type 1 subfamily.

It catalyses the reaction uridine(55) in tRNA = pseudouridine(55) in tRNA. Responsible for synthesis of pseudouridine from uracil-55 in the psi GC loop of transfer RNAs. This chain is tRNA pseudouridine synthase B, found in Rickettsia felis (strain ATCC VR-1525 / URRWXCal2) (Rickettsia azadi).